Consider the following 23-residue polypeptide: Basic phospholipase A2 Smb-N6 (23 aa).

This sequence belongs to the phospholipase A2 family. Group II subfamily. Ca(2+) is required as a cofactor. In terms of processing, contains 7 disulfide bonds. As to expression, expressed by the venom gland.

The protein localises to the secreted. The catalysed reaction is a 1,2-diacyl-sn-glycero-3-phosphocholine + H2O = a 1-acyl-sn-glycero-3-phosphocholine + a fatty acid + H(+). Functionally, snake venom phospholipase A2 (PLA2) that shows myotoxic activities. PLA2 catalyzes the calcium-dependent hydrolysis of the 2-acyl groups in 3-sn-phosphoglycerides. The protein is Basic phospholipase A2 Smb-N6 of Sistrurus miliarius barbouri (Dusky pigmy rattlesnake).